Here is an 877-residue protein sequence, read N- to C-terminus: Bifunctional uridylyltransferase/uridylyl-removing enzyme (877 aa).

The interval 1–335 is uridylyltransferase; that stretch reads MDGPNSDRAH…HRDDAFSPTP (335 aa). Residues 336–695 are uridylyl-removing; the sequence is VNDHFQAVND…LRPESLRGSV (360 aa). Residues 454-576 form the HD domain; it reads VDEHTLFVVR…VRNQNTLNHL (123 aa). ACT domains are found at residues 696–778 and 805–877; these read EVFI…AVSR and ILEL…VGDQ.

It belongs to the GlnD family. The cofactor is Mg(2+).

It catalyses the reaction [protein-PII]-L-tyrosine + UTP = [protein-PII]-uridylyl-L-tyrosine + diphosphate. The catalysed reaction is [protein-PII]-uridylyl-L-tyrosine + H2O = [protein-PII]-L-tyrosine + UMP + H(+). Its activity is regulated as follows. Uridylyltransferase (UTase) activity is inhibited by glutamine, while glutamine activates uridylyl-removing (UR) activity. Its function is as follows. Modifies, by uridylylation and deuridylylation, the PII regulatory proteins (GlnB and homologs), in response to the nitrogen status of the cell that GlnD senses through the glutamine level. Under low glutamine levels, catalyzes the conversion of the PII proteins and UTP to PII-UMP and PPi, while under higher glutamine levels, GlnD hydrolyzes PII-UMP to PII and UMP (deuridylylation). Thus, controls uridylylation state and activity of the PII proteins, and plays an important role in the regulation of nitrogen fixation and metabolism. The sequence is that of Bifunctional uridylyltransferase/uridylyl-removing enzyme from Methylococcus capsulatus (strain ATCC 33009 / NCIMB 11132 / Bath).